The following is a 152-amino-acid chain: Large ribosomal subunit protein uL30 (152 aa).

The protein belongs to the universal ribosomal protein uL30 family. As to quaternary structure, part of the 50S ribosomal subunit.

This is Large ribosomal subunit protein uL30 from Methanobrevibacter smithii (strain ATCC 35061 / DSM 861 / OCM 144 / PS).